Consider the following 260-residue polypeptide: Late transcription factor 1 (260 aa).

The protein belongs to the chordopoxvirinae VLTF-1 family. In terms of assembly, interacts with the late transcription factors VLTF-2 and VLTF-3. Interacts with the late transcription elongation factor VLTF-4. Interacts with itself.

Its function is as follows. Associates with RNA polymerase to initiate transcription from late gene promoters. This Homo sapiens (Human) protein is Late transcription factor 1 (OPG093).